A 216-amino-acid polypeptide reads, in one-letter code: Thiopurine S-methyltransferase (216 aa).

W10, L45, E66, and R123 together coordinate S-adenosyl-L-methionine.

It belongs to the class I-like SAM-binding methyltransferase superfamily. TPMT family.

The protein localises to the cytoplasm. The catalysed reaction is S-adenosyl-L-methionine + a thiopurine = S-adenosyl-L-homocysteine + a thiopurine S-methylether.. The chain is Thiopurine S-methyltransferase from Pseudomonas putida (strain ATCC 47054 / DSM 6125 / CFBP 8728 / NCIMB 11950 / KT2440).